A 509-amino-acid chain; its full sequence is 4-aminobutyrate aminotransferase (509 aa).

Gly166–Ser167 contributes to the pyridoxal 5'-phosphate binding site. Position 223 (Arg223) interacts with substrate. Position 363 is an N6-(pyridoxal phosphate)lysine (Lys363). Thr387 is a pyridoxal 5'-phosphate binding site.

It belongs to the class-III pyridoxal-phosphate-dependent aminotransferase family. Homodimer. Pyridoxal 5'-phosphate is required as a cofactor.

The protein localises to the cytoplasm. It carries out the reaction 4-aminobutanoate + 2-oxoglutarate = succinate semialdehyde + L-glutamate. In terms of biological role, deaminates gamma-aminobutyric acid (GABA) to succinate-semialdehyde, which in turn is converted to succinate by the succinate semialdehyde dehydrogenase. Not required for the utilization of GABA as nitrogen source. This Mycosarcoma maydis (Corn smut fungus) protein is 4-aminobutyrate aminotransferase (GATA).